The chain runs to 215 residues: L-fuculose phosphate aldolase (215 aa).

Substrate is bound by residues 28-29 (GN), 43-44 (TG), and 71-72 (SS). Glu-73 serves as the catalytic Proton donor/acceptor. Zn(2+)-binding residues include Glu-73, His-92, His-94, and His-155.

It belongs to the aldolase class II family. AraD/FucA subfamily. Homotetramer. The cofactor is Zn(2+).

It carries out the reaction L-fuculose 1-phosphate = (S)-lactaldehyde + dihydroxyacetone phosphate. It participates in carbohydrate degradation; L-fucose degradation; L-lactaldehyde and glycerone phosphate from L-fucose: step 3/3. Inhibited by phosphoglycolohydroxamate (PGH). Functionally, involved in the degradation of L-fucose and D-arabinose. Catalyzes the reversible cleavage of L-fuculose 1-phosphate (Fuc1P) to yield dihydroxyacetone phosphate (DHAP) and L-lactaldehyde. Also able to catalyze the reversible cleavage of D-ribulose 1-phosphate, but FucA has a higher affinity for L-fuculose 1-phosphate and L-lactaldehyde than for D-ribulose 1-phosphate and glycolaldehyde, respectively. FucA possesses a high specificity for the dihydroxyacetone phosphate (DHAP), but accepts a great variety of different aldehydes and has a strong preference for L-configurated alpha-hydroxy aldehydes. FucA generates a vicinal diol unit having the absolute (3R,4R)-cis configuration (D-erythro). This chain is L-fuculose phosphate aldolase, found in Escherichia coli (strain K12).